The following is a 73-amino-acid chain: Antimicrobial peptide 6 (73 aa).

The signal sequence occupies residues 1–22; sequence MQIKHLITLFFLVLIVADQCSA. The propeptide occupies 45–73; it reads EISTQIDQYRNLQKREAELEELLDRLPMY.

Belongs to the non-disulfide-bridged peptide (NDBP) superfamily. Short antimicrobial peptide (group 4) family. As to expression, expressed by the venom gland.

The protein localises to the secreted. In terms of biological role, antibacterial peptide. This is Antimicrobial peptide 6 from Tityus costatus (Brazilian scorpion).